The following is a 559-amino-acid chain: Potassium-transporting ATPase potassium-binding subunit (559 aa).

Transmembrane regions (helical) follow at residues 5–25, 63–83, 132–152, 170–190, 250–270, 283–303, 329–349, 356–376, 379–399, 416–436, 484–504, and 524–544; these read GFLL…PLGV, LLAI…MLLG, GLTV…FALI, LVRI…LLFI, LTNM…CFAF, LLWA…SAEV, VLVS…AVIA, ALGG…FGGV, GLYG…LMIG, MTAL…ALAM, LLAF…MAIA, and GALF…LTFI.

It belongs to the KdpA family. In terms of assembly, the system is composed of three essential subunits: KdpA, KdpB and KdpC.

Its subcellular location is the cell inner membrane. In terms of biological role, part of the high-affinity ATP-driven potassium transport (or Kdp) system, which catalyzes the hydrolysis of ATP coupled with the electrogenic transport of potassium into the cytoplasm. This subunit binds the periplasmic potassium ions and delivers the ions to the membrane domain of KdpB through an intramembrane tunnel. In Citrobacter koseri (strain ATCC BAA-895 / CDC 4225-83 / SGSC4696), this protein is Potassium-transporting ATPase potassium-binding subunit.